We begin with the raw amino-acid sequence, 291 residues long: Phosphatidylglycerol--prolipoprotein diacylglyceryl transferase (291 aa).

The next 7 membrane-spanning stretches (helical) occupy residues 21–41 (VSLH…MWLA), 60–80 (LLYA…VLFY), 96–116 (WDGG…MIWF), 130–150 (FIAP…FING), 198–218 (SQLY…NLFI), 225–245 (GAVS…VEFF), and 260–280 (ISMG…MMIW). Residue Arg143 participates in a 1,2-diacyl-sn-glycero-3-phospho-(1'-sn-glycerol) binding.

This sequence belongs to the Lgt family.

It is found in the cell inner membrane. It carries out the reaction L-cysteinyl-[prolipoprotein] + a 1,2-diacyl-sn-glycero-3-phospho-(1'-sn-glycerol) = an S-1,2-diacyl-sn-glyceryl-L-cysteinyl-[prolipoprotein] + sn-glycerol 1-phosphate + H(+). Its pathway is protein modification; lipoprotein biosynthesis (diacylglyceryl transfer). In terms of biological role, catalyzes the transfer of the diacylglyceryl group from phosphatidylglycerol to the sulfhydryl group of the N-terminal cysteine of a prolipoprotein, the first step in the formation of mature lipoproteins. The polypeptide is Phosphatidylglycerol--prolipoprotein diacylglyceryl transferase (Cronobacter sakazakii (strain ATCC BAA-894) (Enterobacter sakazakii)).